The primary structure comprises 176 residues: Nucleoside triphosphate/diphosphate phosphatase (176 aa).

Arginine 23 functions as the Proton donor in the catalytic mechanism. Positions 87, 103, 105, 107, 120, and 123 each coordinate Mg(2+).

Belongs to the Ntdp family. It depends on Mg(2+) as a cofactor.

It catalyses the reaction a ribonucleoside 5'-triphosphate + H2O = a ribonucleoside 5'-diphosphate + phosphate + H(+). It carries out the reaction a ribonucleoside 5'-diphosphate + H2O = a ribonucleoside 5'-phosphate + phosphate + H(+). Functionally, has nucleoside phosphatase activity towards nucleoside triphosphates and nucleoside diphosphates. The protein is Nucleoside triphosphate/diphosphate phosphatase of Lactococcus lactis subsp. cremoris (strain MG1363).